Consider the following 282-residue polypeptide: Shikimate dehydrogenase (NADP(+)) (282 aa).

Shikimate contacts are provided by residues 15 to 17 (SKS) and Thr62. Residue Lys66 is the Proton acceptor of the active site. 2 residues coordinate shikimate: Asn87 and Asp103. Residues 127–131 (GAGGA), 151–156 (NRTHTK), and Met220 each bind NADP(+). Tyr222 lines the shikimate pocket. Gly244 is a binding site for NADP(+).

Belongs to the shikimate dehydrogenase family. In terms of assembly, homodimer.

The enzyme catalyses shikimate + NADP(+) = 3-dehydroshikimate + NADPH + H(+). It functions in the pathway metabolic intermediate biosynthesis; chorismate biosynthesis; chorismate from D-erythrose 4-phosphate and phosphoenolpyruvate: step 4/7. Involved in the biosynthesis of the chorismate, which leads to the biosynthesis of aromatic amino acids. Catalyzes the reversible NADPH linked reduction of 3-dehydroshikimate (DHSA) to yield shikimate (SA). The sequence is that of Shikimate dehydrogenase (NADP(+)) from Shewanella putrefaciens (strain CN-32 / ATCC BAA-453).